Reading from the N-terminus, the 469-residue chain is Glutamine synthetase (469 aa).

Positions 15 to 96 (NDVKFIDVRF…INFFIHDPIT (82 aa)) constitute a GS beta-grasp domain. The 366-residue stretch at 104–469 (PRNIAKKAEA…PHEFELYFDI (366 aa)) folds into the GS catalytic domain. Residues glutamate 129 and glutamate 131 each coordinate Mg(2+). Glutamate 205 provides a ligand contact to ATP. Mg(2+) is bound by residues glutamate 210 and glutamate 218. An ATP-binding site is contributed by 221 to 223 (YKF). L-glutamate-binding positions include 262–263 (NG) and glycine 263. Histidine 267 lines the Mg(2+) pocket. ATP is bound by residues 269–271 (HQS) and serine 271. The L-glutamate site is built by arginine 320, glutamate 326, and arginine 338. Positions 338, 343, and 352 each coordinate ATP. Mg(2+) is bound at residue glutamate 357. An L-glutamate-binding site is contributed by arginine 359. At tyrosine 397 the chain carries O-AMP-tyrosine.

This sequence belongs to the glutamine synthetase family. Oligomer of 12 subunits arranged in the form of two hexagons. The cofactor is Mg(2+).

It is found in the cytoplasm. The catalysed reaction is L-glutamate + NH4(+) + ATP = L-glutamine + ADP + phosphate + H(+). The activity of this enzyme could be controlled by adenylation under conditions of abundant glutamine. Its function is as follows. Catalyzes the ATP-dependent biosynthesis of glutamine from glutamate and ammonia. This is Glutamine synthetase from Streptomyces filamentosus (Streptomyces roseosporus).